The primary structure comprises 90 residues: Probable Fe(2+)-trafficking protein (90 aa).

Belongs to the Fe(2+)-trafficking protein family.

Functionally, could be a mediator in iron transactions between iron acquisition and iron-requiring processes, such as synthesis and/or repair of Fe-S clusters in biosynthetic enzymes. This Pseudomonas putida (strain ATCC 700007 / DSM 6899 / JCM 31910 / BCRC 17059 / LMG 24140 / F1) protein is Probable Fe(2+)-trafficking protein.